A 606-amino-acid polypeptide reads, in one-letter code: Aspartate--tRNA(Asp/Asn) ligase (606 aa).

Position 196 (glutamate 196) interacts with L-aspartate. The tract at residues 220–223 (QIFK) is aspartate. Arginine 242 is a binding site for L-aspartate. ATP contacts are provided by residues 242 to 244 (RDE) and glutamine 251. Histidine 465 lines the L-aspartate pocket. Glutamate 499 lines the ATP pocket. Arginine 506 provides a ligand contact to L-aspartate. 551 to 554 (GMDR) contributes to the ATP binding site.

It belongs to the class-II aminoacyl-tRNA synthetase family. Type 1 subfamily. In terms of assembly, homodimer.

The protein localises to the cytoplasm. It catalyses the reaction tRNA(Asx) + L-aspartate + ATP = L-aspartyl-tRNA(Asx) + AMP + diphosphate. Functionally, aspartyl-tRNA synthetase with relaxed tRNA specificity since it is able to aspartylate not only its cognate tRNA(Asp) but also tRNA(Asn). Reaction proceeds in two steps: L-aspartate is first activated by ATP to form Asp-AMP and then transferred to the acceptor end of tRNA(Asp/Asn). This chain is Aspartate--tRNA(Asp/Asn) ligase, found in Oleidesulfovibrio alaskensis (strain ATCC BAA-1058 / DSM 17464 / G20) (Desulfovibrio alaskensis).